A 682-amino-acid chain; its full sequence is Potassium-transporting ATPase ATP-binding subunit (682 aa).

The next 4 helical transmembrane spans lie at 35–55 (VMFIVWVGSLLTTLLAIAMAG), 62–82 (ATFTAAVSIWLWFTVLFANFA), 219–239 (IALTILLIALTLVFLLATATI), and 254–274 (VLVALLVCLIPTTIGGLLSAI). Residue Asp-307 is the 4-aspartylphosphate intermediate of the active site. ATP is bound by residues Asp-344, Glu-348, 377–384 (FTAQTRMS), and Lys-395. Mg(2+) contacts are provided by Asp-518 and Asp-522. The next 3 helical transmembrane spans lie at 588–608 (FAIIPAAFAAVYPQLAMLNVM), 616–636 (AILSAVIFNALIIVFLIPLAL), and 656–676 (IYGLGGLLVPFIGIKAIDLLL).

The protein belongs to the cation transport ATPase (P-type) (TC 3.A.3) family. Type IA subfamily. The system is composed of three essential subunits: KdpA, KdpB and KdpC.

The protein resides in the cell inner membrane. The enzyme catalyses K(+)(out) + ATP + H2O = K(+)(in) + ADP + phosphate + H(+). In terms of biological role, part of the high-affinity ATP-driven potassium transport (or Kdp) system, which catalyzes the hydrolysis of ATP coupled with the electrogenic transport of potassium into the cytoplasm. This subunit is responsible for energy coupling to the transport system and for the release of the potassium ions to the cytoplasm. In Klebsiella pneumoniae (strain 342), this protein is Potassium-transporting ATPase ATP-binding subunit.